Here is a 239-residue protein sequence, read N- to C-terminus: Pyridoxine 5'-phosphate synthase (239 aa).

N7 is a binding site for 3-amino-2-oxopropyl phosphate. Position 9-10 (9-10) interacts with 1-deoxy-D-xylulose 5-phosphate; the sequence is DH. R18 provides a ligand contact to 3-amino-2-oxopropyl phosphate. The active-site Proton acceptor is H43. 1-deoxy-D-xylulose 5-phosphate-binding residues include R45 and H50. The active-site Proton acceptor is E70. 1-deoxy-D-xylulose 5-phosphate is bound at residue T100. Residue H191 is the Proton donor of the active site. 3-amino-2-oxopropyl phosphate-binding positions include G192 and 213–214; that span reads GH.

It belongs to the PNP synthase family. In terms of assembly, homooctamer; tetramer of dimers.

Its subcellular location is the cytoplasm. It catalyses the reaction 3-amino-2-oxopropyl phosphate + 1-deoxy-D-xylulose 5-phosphate = pyridoxine 5'-phosphate + phosphate + 2 H2O + H(+). Its pathway is cofactor biosynthesis; pyridoxine 5'-phosphate biosynthesis; pyridoxine 5'-phosphate from D-erythrose 4-phosphate: step 5/5. Its function is as follows. Catalyzes the complicated ring closure reaction between the two acyclic compounds 1-deoxy-D-xylulose-5-phosphate (DXP) and 3-amino-2-oxopropyl phosphate (1-amino-acetone-3-phosphate or AAP) to form pyridoxine 5'-phosphate (PNP) and inorganic phosphate. This Geobacter sulfurreducens (strain ATCC 51573 / DSM 12127 / PCA) protein is Pyridoxine 5'-phosphate synthase.